A 124-amino-acid polypeptide reads, in one-letter code: Small ribosomal subunit protein uS12c (124 aa).

Positions 104–124 (SGGVKDRTQRRSKYGVKKPKS) are disordered. Positions 113–124 (RRSKYGVKKPKS) are enriched in basic residues.

It belongs to the universal ribosomal protein uS12 family. In terms of assembly, part of the 30S ribosomal subunit.

It localises to the plastid. The protein localises to the chloroplast. With S4 and S5 plays an important role in translational accuracy. Located at the interface of the 30S and 50S subunits. The polypeptide is Small ribosomal subunit protein uS12c (rps12) (Thalassiosira pseudonana (Marine diatom)).